Here is a 233-residue protein sequence, read N- to C-terminus: Fibroblast growth factor 8 (233 aa).

The first 22 residues, 1–22 (MGSPRSALSCLLLHLLVLCLQA), serve as a signal peptide directing secretion. Residue N155 is glycosylated (N-linked (GlcNAc...) asparagine).

Belongs to the heparin-binding growth factors family. Monomer. Homodimer. Interacts with FGFR1, FGFR2, FGFR3 and FGFR4. Affinity between fibroblast growth factors (FGFs) and their receptors is increased by heparan sulfate glycosaminoglycans that function as coreceptors.

It localises to the secreted. Functionally, plays an important role in the regulation of embryonic development, cell proliferation, cell differentiation and cell migration. Required for normal brain, eye, ear and limb development during embryogenesis. Required for normal development of the gonadotropin-releasing hormone (GnRH) neuronal system. Plays a role in neurite outgrowth in hippocampal cells. The polypeptide is Fibroblast growth factor 8 (FGF8) (Homo sapiens (Human)).